We begin with the raw amino-acid sequence, 224 residues long: PKHD-type hydroxylase Sbal_3634 (224 aa).

One can recognise a Fe2OG dioxygenase domain in the interval 78 to 176; the sequence is QFYPPLFNRY…RTAAFMWLQS (99 aa). Histidine 96, aspartate 98, and histidine 157 together coordinate Fe cation. Position 167 (arginine 167) interacts with 2-oxoglutarate.

Requires Fe(2+) as cofactor. L-ascorbate serves as cofactor.

The sequence is that of PKHD-type hydroxylase Sbal_3634 from Shewanella baltica (strain OS155 / ATCC BAA-1091).